The chain runs to 356 residues: Histidinol-phosphate aminotransferase 1 (356 aa).

An N6-(pyridoxal phosphate)lysine modification is found at lysine 217.

The protein belongs to the class-II pyridoxal-phosphate-dependent aminotransferase family. Histidinol-phosphate aminotransferase subfamily. Homodimer. The cofactor is pyridoxal 5'-phosphate.

The enzyme catalyses L-histidinol phosphate + 2-oxoglutarate = 3-(imidazol-4-yl)-2-oxopropyl phosphate + L-glutamate. The protein operates within amino-acid biosynthesis; L-histidine biosynthesis; L-histidine from 5-phospho-alpha-D-ribose 1-diphosphate: step 7/9. The protein is Histidinol-phosphate aminotransferase 1 of Burkholderia mallei (strain ATCC 23344).